The chain runs to 233 residues: Proteasome subunit alpha (233 aa).

The protein belongs to the peptidase T1A family. As to quaternary structure, the 20S proteasome core is composed of 14 alpha and 14 beta subunits that assemble into four stacked heptameric rings, resulting in a barrel-shaped structure. The two inner rings, each composed of seven catalytic beta subunits, are sandwiched by two outer rings, each composed of seven alpha subunits. The catalytic chamber with the active sites is on the inside of the barrel. Has a gated structure, the ends of the cylinder being occluded by the N-termini of the alpha-subunits. Is capped at one or both ends by the proteasome regulatory ATPase, PAN. The N-terminus is blocked.

The protein resides in the cytoplasm. Its activity is regulated as follows. The formation of the proteasomal ATPase PAN-20S proteasome complex, via the docking of the C-termini of PAN into the intersubunit pockets in the alpha-rings, triggers opening of the gate for substrate entry. Interconversion between the open-gate and close-gate conformations leads to a dynamic regulation of the 20S proteasome proteolysis activity. Its function is as follows. Component of the proteasome core, a large protease complex with broad specificity involved in protein degradation. The T.acidophilum proteasome is able to cleave oligopeptides after Tyr, Leu, Phe, and to a lesser extent after Glu and Arg. Thus, displays chymotrypsin-like activity and low level of caspase-like and trypsin-like activities. The sequence is that of Proteasome subunit alpha from Thermoplasma acidophilum (strain ATCC 25905 / DSM 1728 / JCM 9062 / NBRC 15155 / AMRC-C165).